The sequence spans 243 residues: Terpene cyclase penB (243 aa).

Transmembrane regions (helical) follow at residues 19-39 (IANI…VGMI), 48-68 (YGMA…YSLI), and 78-98 (GVFI…IKFA). The N-linked (GlcNAc...) asparagine glycan is linked to asparagine 111. A run of 4 helical transmembrane segments spans residues 112 to 132 (LSLI…ALAA), 137 to 157 (SLAY…GGLC), 172 to 194 (LWLS…WMYW), and 205 to 225 (LVLW…LCYW).

This sequence belongs to the paxB family.

The protein localises to the membrane. It participates in secondary metabolite biosynthesis. Functionally, terpene cyclase; part of the gene cluster that mediates the biosynthesis of the indole diterpenes penitrems. The geranylgeranyl diphosphate (GGPP) synthase penG catalyzes the first step in penitrem biosynthesis via conversion of farnesyl pyrophosphate and isopentyl pyrophosphate into geranylgeranyl pyrophosphate (GGPP). Condensation of indole-3-glycerol phosphate with GGPP by the prenyl transferase penC then forms 3-geranylgeranylindole (3-GGI). Epoxidation by the FAD-dependent monooxygenase penM leads to a epoxidized-GGI that is substrate of the terpene cyclase penB for cyclization to yield paspaline. Paspaline is subsequently converted to 13-desoxypaxilline by the cytochrome P450 monooxygenase penP, the latter being then converted to paxilline by the cytochrome P450 monooxygenase penQ. Paxilline is converted to beta-paxitriol via C-10 ketoreduction by the short-chain dehydrogenase PC-15 which can be monoprenylated at the C-20 by the indole diterpene prenyltransferase penD. A two-step elimination (acetylation and elimination) process performed by the O-acetyltransferase PC-16 and the P.simplicissimum ptmI-ortholog not yet identified in P.crustosum, leads to the production of the prenylated form of penijanthine. The FAD-linked oxidoreductase ptmO then converts the prenylated form of penijanthine into PC-M5 which is in turn transformed into PC-M4 by the aromatic dimethylallyltransferase PC-22. A series of oxidation steps involving 4 cytochrome P450 monooxygenases (PC-21, PC-05, PC-23, PC-20) and a FAD-dependent monooxygenase (PC-14) are required for the transformation of PC-M4 to penitrems A and E. Synthesis of these final products is proposed to proceed via penitrems D and C (PC-21, PC-05, PC-14) and penitrems B and F (PC-21, PC-05, PC-14, PC-23). This chain is Terpene cyclase penB (penB), found in Penicillium crustosum (Blue mold fungus).